A 209-amino-acid polypeptide reads, in one-letter code: MPLNEMVSVVTNLVERGYIRKKSVVSALLSVPRHKFVPKYLESSAYQDNPLEIGYGQTISAIHMVGIMCEELDLDKGQNVLEIGTGSGYHAAVVLEIIGKSGKLTTIERVFELFNSAKENLLKFGYNNIEVIYGDGTKGHIENAPYDRIYLTAAGKKVPEILFEQLNDGGILLAPVGTYNQYLIKYMKINGQIYEEILLEVSFVPLIEE.

Residue S60 is part of the active site.

Belongs to the methyltransferase superfamily. L-isoaspartyl/D-aspartyl protein methyltransferase family.

It localises to the cytoplasm. The catalysed reaction is [protein]-L-isoaspartate + S-adenosyl-L-methionine = [protein]-L-isoaspartate alpha-methyl ester + S-adenosyl-L-homocysteine. Catalyzes the methyl esterification of L-isoaspartyl residues in peptides and proteins that result from spontaneous decomposition of normal L-aspartyl and L-asparaginyl residues. It plays a role in the repair and/or degradation of damaged proteins. In Methanococcus vannielii (strain ATCC 35089 / DSM 1224 / JCM 13029 / OCM 148 / SB), this protein is Protein-L-isoaspartate O-methyltransferase.